Here is a 108-residue protein sequence, read N- to C-terminus: uncharacterized protein (108 aa).

Transmembrane regions (helical) follow at residues 4–24 (IIFL…FFSM), 46–66 (GMMV…IFIG), and 81–101 (IMAI…WFVL).

Its subcellular location is the cell membrane. This is an uncharacterized protein from Escherichia coli O157:H7.